A 189-amino-acid chain; its full sequence is GMP synthase [glutamine-hydrolyzing] subunit A (189 aa).

The Glutamine amidotransferase type-1 domain occupies 5-189; sequence KILVVNNYGQ…TNFFEVCDRY (185 aa). The active-site Nucleophile is the Cys79. Residues His166 and Glu168 contribute to the active site.

As to quaternary structure, heterodimer composed of a glutamine amidotransferase subunit (A) and a GMP-binding subunit (B).

The catalysed reaction is XMP + L-glutamine + ATP + H2O = GMP + L-glutamate + AMP + diphosphate + 2 H(+). Its pathway is purine metabolism; GMP biosynthesis; GMP from XMP (L-Gln route): step 1/1. Functionally, catalyzes the synthesis of GMP from XMP. The protein is GMP synthase [glutamine-hydrolyzing] subunit A of Methanosarcina acetivorans (strain ATCC 35395 / DSM 2834 / JCM 12185 / C2A).